A 279-amino-acid polypeptide reads, in one-letter code: Proto-oncogene FRAT1 (279 aa).

Disordered stretches follow at residues Met1–Ser24 and Ala56–Pro76. Residues Glu7–Ser24 show a composition bias toward acidic residues. Position 88 is a phosphoserine (Ser88). 2 disordered regions span residues Gly136–His200 and Arg228–Ser279. Residues Asp198–Leu220 are involved in GSK-3 binding. Phosphoserine occurs at positions 249 and 252.

This sequence belongs to the GSK-3-binding protein family. As to quaternary structure, binds DVL1. Binds GSK-3 and prevent GSK-3-dependent phosphorylation. Phosphorylated.

The protein resides in the cytoplasm. Positively regulates the Wnt signaling pathway by stabilizing beta-catenin through the association with GSK-3. May play a role in tumor progression and collaborate with PIM1 and MYC in lymphomagenesis. This Homo sapiens (Human) protein is Proto-oncogene FRAT1 (FRAT1).